Reading from the N-terminus, the 760-residue chain is Probable 3',5'-cyclic phosphodiesterase pde-6 (760 aa).

2 disordered regions span residues 1–47 and 410–429; these read MGDR…AATA and KRSVVDAHREKRGSHGERRR. Residues 33–47 are compositionally biased toward low complexity; that stretch reads PAARRGAQRAPAATA. Basic and acidic residues predominate over residues 412-429; it reads SVVDAHREKRGSHGERRR. Residues 426–750 enclose the PDEase domain; it reads ERRRVSADVK…EKWKVMTSQW (325 aa). His-502 serves as the catalytic Proton donor. Residues His-506, His-542, Asp-543, and Asp-656 each contribute to the a divalent metal cation site.

It belongs to the cyclic nucleotide phosphodiesterase family. A divalent metal cation serves as cofactor.

The enzyme catalyses a nucleoside 3',5'-cyclic phosphate + H2O = a nucleoside 5'-phosphate + H(+). The polypeptide is Probable 3',5'-cyclic phosphodiesterase pde-6 (pde-6) (Caenorhabditis elegans).